Consider the following 155-residue polypeptide: Probable Brix domain-containing ribosomal biogenesis protein (155 aa).

Positions 1-155 constitute a Brix domain; sequence MLLTTSRKPS…LLIRDFRVGE (155 aa).

Probably involved in the biogenesis of the ribosome. The protein is Probable Brix domain-containing ribosomal biogenesis protein of Methanothermobacter thermautotrophicus (strain ATCC 29096 / DSM 1053 / JCM 10044 / NBRC 100330 / Delta H) (Methanobacterium thermoautotrophicum).